The primary structure comprises 322 residues: 4-diphosphocytidyl-2-C-methyl-D-erythritol kinase (322 aa).

The active site involves Lys25. 110–120 is a binding site for ATP; sequence PVAGGMAGGSA. Residue Asp152 is part of the active site.

Belongs to the GHMP kinase family. IspE subfamily.

The catalysed reaction is 4-CDP-2-C-methyl-D-erythritol + ATP = 4-CDP-2-C-methyl-D-erythritol 2-phosphate + ADP + H(+). Its pathway is isoprenoid biosynthesis; isopentenyl diphosphate biosynthesis via DXP pathway; isopentenyl diphosphate from 1-deoxy-D-xylulose 5-phosphate: step 3/6. Catalyzes the phosphorylation of the position 2 hydroxy group of 4-diphosphocytidyl-2C-methyl-D-erythritol. This chain is 4-diphosphocytidyl-2-C-methyl-D-erythritol kinase, found in Mycolicibacterium vanbaalenii (strain DSM 7251 / JCM 13017 / BCRC 16820 / KCTC 9966 / NRRL B-24157 / PYR-1) (Mycobacterium vanbaalenii).